A 249-amino-acid polypeptide reads, in one-letter code: Hydroxyacylglutathione hydrolase (249 aa).

Zn(2+)-binding residues include His-54, His-56, Asp-58, His-59, His-113, Asp-138, and His-176.

It belongs to the metallo-beta-lactamase superfamily. Glyoxalase II family. Monomer. The cofactor is Zn(2+).

The catalysed reaction is an S-(2-hydroxyacyl)glutathione + H2O = a 2-hydroxy carboxylate + glutathione + H(+). It participates in secondary metabolite metabolism; methylglyoxal degradation; (R)-lactate from methylglyoxal: step 2/2. Its function is as follows. Thiolesterase that catalyzes the hydrolysis of S-D-lactoyl-glutathione to form glutathione and D-lactic acid. This chain is Hydroxyacylglutathione hydrolase, found in Synechococcus sp. (strain CC9605).